The following is a 715-amino-acid chain: Polyribonucleotide nucleotidyltransferase (715 aa).

The Mg(2+) site is built by Asp-485 and Asp-491. A KH domain is found at 552-611; that stretch reads PRIHTMKIDPKKIKDVIGKGGAVIRALTEETGTSIDIDDDGTVKIAATDNNAAKAVMARI. One can recognise an S1 motif domain in the interval 621–689; sequence NAIYKGKVTR…RQNRIRLTMK (69 aa). A disordered region spans residues 695–715; it reads TPVAENVTEEAEVSSEQQAEI.

It belongs to the polyribonucleotide nucleotidyltransferase family. In terms of assembly, component of the RNA degradosome, which is a multiprotein complex involved in RNA processing and mRNA degradation. It depends on Mg(2+) as a cofactor.

Its subcellular location is the cytoplasm. It carries out the reaction RNA(n+1) + phosphate = RNA(n) + a ribonucleoside 5'-diphosphate. Its function is as follows. Involved in mRNA degradation. Catalyzes the phosphorolysis of single-stranded polyribonucleotides processively in the 3'- to 5'-direction. The polypeptide is Polyribonucleotide nucleotidyltransferase (Actinobacillus pleuropneumoniae serotype 7 (strain AP76)).